We begin with the raw amino-acid sequence, 38 residues long: Large ribosomal subunit protein bL36 (38 aa).

The protein belongs to the bacterial ribosomal protein bL36 family.

The sequence is that of Large ribosomal subunit protein bL36 from Pseudomonas entomophila (strain L48).